Here is a 518-residue protein sequence, read N- to C-terminus: Sensor protein kinase HptS (518 aa).

2 helical membrane passes run 20 to 40 (IFPV…IYIW) and 222 to 242 (GITL…FGFI). A Histidine kinase domain is found at 297 to 513 (EQLIHSIEHT…LICYKIPLSR (217 aa)). His325 is modified (phosphohistidine; by autocatalysis).

In terms of processing, autophosphorylated.

Its subcellular location is the cell membrane. The enzyme catalyses ATP + protein L-histidine = ADP + protein N-phospho-L-histidine.. In terms of biological role, member of the two-component regulatory system HptS/HptR that regulates genes involved in hexose phosphate transport system in response to changes in extracellular phosphate sources. May act as a sensor protein kinase which is autophosphorylated at a histidine residue and transfers its phosphate group to the conserved aspartic acid residue in the regulatory domain of HptS. In turn, HptS antagonizes CcpA-dependent transcription of a subset of CcpA-regulated genes involved in antibiotic susceptibility. The sequence is that of Sensor protein kinase HptS (hptS) from Staphylococcus aureus (strain MRSA252).